Here is a 249-residue protein sequence, read N- to C-terminus: Protection of telomeres protein poz1 (249 aa).

Interacts with pot1, rap1 and tpz1.

The protein localises to the cytoplasm. It localises to the nucleus. It is found in the chromosome. Its subcellular location is the telomere. Functionally, telomeric DNA-binding protein that negatively regulates telomerase and telomere length. The chain is Protection of telomeres protein poz1 (poz1) from Schizosaccharomyces pombe (strain 972 / ATCC 24843) (Fission yeast).